A 528-amino-acid polypeptide reads, in one-letter code: DNA damage-binding protein cmr1 (528 aa).

Disordered regions lie at residues 32-98 (AQSS…QYEA) and 217-243 (DASQ…DPDP). Positions 52–62 (KPKKKPPPKKV) are enriched in basic residues. One copy of the WD 1 repeat lies at 185–226 (LTPERIYTMTFHPSEAKPLIFAGDKMGNLGVLDASQEKPTSA). A compositionally biased stretch (acidic residues) spans 230-242 (EDDEEDAEDDDPD). WD repeat units follow at residues 250-290 (PHTR…SVEK), 297-337 (SDDI…RSAV), 342-382 (LSEK…HDDP), 389-428 (VSRL…AAWE), 451-494 (GRWV…LAQL), and 497-528 (DGIT…CLWM).

This sequence belongs to the WD repeat DDB2/WDR76 family.

DNA-binding protein that binds to both single- and double-stranded DNA. Binds preferentially to UV-damaged DNA. May be involved in DNA-metabolic processes. The protein is DNA damage-binding protein cmr1 of Aspergillus fumigatus (strain CBS 144.89 / FGSC A1163 / CEA10) (Neosartorya fumigata).